The following is a 238-amino-acid chain: Tyrosine recombinase XerD-like (238 aa).

The Core-binding (CB) domain maps to M1–Y75. Positions V90–R238 constitute a Tyr recombinase domain. Catalysis depends on residues K154 and R204. The O-(3'-phospho-DNA)-tyrosine intermediate role is filled by Y236.

This sequence belongs to the 'phage' integrase family. XerD-like subfamily.

It localises to the cytoplasm. Functionally, putative tyrosine recombinase. Not involved in the cutting and rejoining of the recombining DNA molecules on dif(SL) site. The chain is Tyrosine recombinase XerD-like from Lactococcus lactis subsp. cremoris (strain SK11).